The primary structure comprises 475 residues: Coronin-2B (475 aa).

WD repeat units follow at residues 80–120, 130–172, 174–212, 215–258, and 260–303; these read GHQG…LKRN, GHSR…KMID, HTDV…VLQE, CKNH…MPVT, and EEID…PYLT. Residues 431 to 470 are a coiled coil; sequence NELLRMFFKQQEEIRRLKEQLSQRDLLVRQLELELKNLRN.

It belongs to the WD repeat coronin family.

It localises to the cytoplasm. The protein resides in the cytoskeleton. In terms of biological role, may play a role in the reorganization of neuronal actin structure. This Xenopus laevis (African clawed frog) protein is Coronin-2B (coro2b).